A 105-amino-acid polypeptide reads, in one-letter code: UPF0235 protein RT0827 (105 aa).

It belongs to the UPF0235 family.

This chain is UPF0235 protein RT0827, found in Rickettsia typhi (strain ATCC VR-144 / Wilmington).